Reading from the N-terminus, the 968-residue chain is Isoleucine--tRNA ligase (968 aa).

A 'HIGH' region motif is present at residues 68–78 (PYANGALHMGH). L-isoleucyl-5'-AMP is bound at residue glutamate 582. The 'KMSKS' region signature appears at 623 to 627 (KMSKS). Lysine 626 is an ATP binding site. Residues cysteine 936, cysteine 939, cysteine 956, and cysteine 959 each contribute to the Zn(2+) site.

Belongs to the class-I aminoacyl-tRNA synthetase family. IleS type 1 subfamily. As to quaternary structure, monomer. Zn(2+) serves as cofactor.

The protein resides in the cytoplasm. The enzyme catalyses tRNA(Ile) + L-isoleucine + ATP = L-isoleucyl-tRNA(Ile) + AMP + diphosphate. Its function is as follows. Catalyzes the attachment of isoleucine to tRNA(Ile). As IleRS can inadvertently accommodate and process structurally similar amino acids such as valine, to avoid such errors it has two additional distinct tRNA(Ile)-dependent editing activities. One activity is designated as 'pretransfer' editing and involves the hydrolysis of activated Val-AMP. The other activity is designated 'posttransfer' editing and involves deacylation of mischarged Val-tRNA(Ile). The sequence is that of Isoleucine--tRNA ligase from Prochlorococcus marinus (strain AS9601).